The following is a 156-amino-acid chain: Ribosome maturation factor RimP (156 aa).

It belongs to the RimP family.

The protein localises to the cytoplasm. Functionally, required for maturation of 30S ribosomal subunits. The polypeptide is Ribosome maturation factor RimP (Bacillus mycoides (strain KBAB4) (Bacillus weihenstephanensis)).